We begin with the raw amino-acid sequence, 308 residues long: Aspartate carbamoyltransferase catalytic subunit (308 aa).

Carbamoyl phosphate contacts are provided by R57 and T58. K86 provides a ligand contact to L-aspartate. Residues R107, H135, and Q138 each coordinate carbamoyl phosphate. Positions 167 and 228 each coordinate L-aspartate. The carbamoyl phosphate site is built by L267 and P268.

The protein belongs to the aspartate/ornithine carbamoyltransferase superfamily. ATCase family. In terms of assembly, heterooligomer of catalytic and regulatory chains.

It catalyses the reaction carbamoyl phosphate + L-aspartate = N-carbamoyl-L-aspartate + phosphate + H(+). Its pathway is pyrimidine metabolism; UMP biosynthesis via de novo pathway; (S)-dihydroorotate from bicarbonate: step 2/3. Its function is as follows. Catalyzes the condensation of carbamoyl phosphate and aspartate to form carbamoyl aspartate and inorganic phosphate, the committed step in the de novo pyrimidine nucleotide biosynthesis pathway. The polypeptide is Aspartate carbamoyltransferase catalytic subunit (Methanosarcina acetivorans (strain ATCC 35395 / DSM 2834 / JCM 12185 / C2A)).